A 391-amino-acid chain; its full sequence is Digeranylgeranylglycerophospholipid reductase (391 aa).

Residues Gly18, Glu37, Cys48, Ala49, Ala51, Arg98, Ala122, Asp279, Gly291, and Ile292 each coordinate FAD.

Belongs to the geranylgeranyl reductase family. DGGGPL reductase subfamily. Requires FAD as cofactor.

The catalysed reaction is a 2,3-bis-O-phytanyl-sn-glycerol 1-phospholipid + 8 A = a 2,3-bis-O-(geranylgeranyl)-sn-glycerol 1-phospholipid + 8 AH2. The enzyme catalyses 2,3-bis-O-(phytanyl)-sn-glycerol 1-phosphate + 8 A = 2,3-bis-O-(geranylgeranyl)-sn-glycerol 1-phosphate + 8 AH2. It carries out the reaction CDP-2,3-bis-O-(geranylgeranyl)-sn-glycerol + 8 AH2 = CDP-2,3-bis-O-(phytanyl)-sn-glycerol + 8 A. It catalyses the reaction archaetidylserine + 8 AH2 = 2,3-bis-O-phytanyl-sn-glycero-3-phospho-L-serine + 8 A. The protein operates within membrane lipid metabolism; glycerophospholipid metabolism. Is involved in the reduction of 2,3-digeranylgeranylglycerophospholipids (unsaturated archaeols) into 2,3-diphytanylglycerophospholipids (saturated archaeols) in the biosynthesis of archaeal membrane lipids. Catalyzes the formation of archaetidic acid (2,3-di-O-phytanyl-sn-glyceryl phosphate) from 2,3-di-O-geranylgeranylglyceryl phosphate (DGGGP) via the hydrogenation of each double bond of the isoprenoid chains. Is also probably able to reduce double bonds of geranyl groups in CDP-2,3-bis-O-(geranylgeranyl)-sn-glycerol and archaetidylserine, thus acting at various stages in the biosynthesis of archaeal membrane lipids. This chain is Digeranylgeranylglycerophospholipid reductase, found in Methanocaldococcus jannaschii (strain ATCC 43067 / DSM 2661 / JAL-1 / JCM 10045 / NBRC 100440) (Methanococcus jannaschii).